Here is a 565-residue protein sequence, read N- to C-terminus: Nephronectin (565 aa).

Positions 1–19 (MDFLLALVLVSSLYLQAAA) are cleaved as a signal peptide. In terms of domain architecture, EGF-like 1 spans 52-87 (SWGQCQPVCQPRCKHGECIGPNKCKCHPGYAGKTCN). Intrachain disulfides connect C56/C69, C60/C75, C77/C86, C93/C104, C100/C113, and C115/C127. The region spanning 89–128 (DLNECGLKPRPCKHRCMNTYGSYKCYCLNGYMLMPDGSCS) is the EGF-like 2; calcium-binding domain. An EGF-like 3 domain is found at 132–168 (TCSMANCQYGCDVVKGQIRCQCPSPGLQLAPDGRTCV). An EGF-like 4; calcium-binding domain is found at 169–213 (DVDECATGRASCPRFRQCVNTFGSYICKCHKGFNLMYIGGKYQCH). Intrachain disulfides connect C173–C186, C180–C195, C197–C212, C218–C231, C225–C240, and C242–C253. The EGF-like 5; calcium-binding domain occupies 214 to 254 (DIDECSLGQYQCSSFARCYNIHGSYKCKCKEGYQGDGLTCV). The interval 301 to 373 (YIPPIITNRP…PPGGITVDNR (73 aa)) is disordered. Residues 304–316 (PIITNRPTSKPTT) show a composition bias toward low complexity. Residues 317 to 349 (RPTPKPTPIPTPPPPPPLPTELRTPLPPTTPER) are compositionally biased toward pro residues. The Integrin interaction motif lies at 382–384 (RGD). An MAM domain is found at 420–563 (HSCNFDHGLC…VSLKKGHCSE (144 aa)).

It belongs to the nephronectin family. As to quaternary structure, homodimer and homotrimer.

It is found in the secreted. Its subcellular location is the extracellular space. It localises to the extracellular matrix. Functionally, functional ligand of integrin alpha-8/beta-1 in kidney development. Regulates the expression of GDNF with integrin alpha-8/beta-1 which is essential for kidney development. May also play a role in the development and function of various tissues, regulating cell adhesion, spreading and survival through the binding of several integrins. The sequence is that of Nephronectin (NPNT) from Pongo abelii (Sumatran orangutan).